Consider the following 273-residue polypeptide: Ribosomal RNA small subunit methyltransferase A (273 aa).

Positions 18, 20, 45, 66, 91, and 113 each coordinate S-adenosyl-L-methionine.

It belongs to the class I-like SAM-binding methyltransferase superfamily. rRNA adenine N(6)-methyltransferase family. RsmA subfamily.

It localises to the cytoplasm. The enzyme catalyses adenosine(1518)/adenosine(1519) in 16S rRNA + 4 S-adenosyl-L-methionine = N(6)-dimethyladenosine(1518)/N(6)-dimethyladenosine(1519) in 16S rRNA + 4 S-adenosyl-L-homocysteine + 4 H(+). Specifically dimethylates two adjacent adenosines (A1518 and A1519) in the loop of a conserved hairpin near the 3'-end of 16S rRNA in the 30S particle. May play a critical role in biogenesis of 30S subunits. The chain is Ribosomal RNA small subunit methyltransferase A from Salmonella typhimurium (strain LT2 / SGSC1412 / ATCC 700720).